The primary structure comprises 281 residues: NAD kinase (281 aa).

Aspartate 61 acts as the Proton acceptor in catalysis. Residues 61 to 62 (DG), 134 to 135 (ND), arginine 145, aspartate 164, 175 to 180 (TAYSLS), and glutamine 234 each bind NAD(+).

It belongs to the NAD kinase family. The cofactor is a divalent metal cation.

The protein localises to the cytoplasm. The catalysed reaction is NAD(+) + ATP = ADP + NADP(+) + H(+). Functionally, involved in the regulation of the intracellular balance of NAD and NADP, and is a key enzyme in the biosynthesis of NADP. Catalyzes specifically the phosphorylation on 2'-hydroxyl of the adenosine moiety of NAD to yield NADP. The polypeptide is NAD kinase (Clostridium botulinum (strain ATCC 19397 / Type A)).